A 257-amino-acid chain; its full sequence is Large ribosomal subunit protein uL2 (257 aa).

The tract at residues 207 to 231 (VEHPFGGGNHQHIGKPSTIRRDAPA) is disordered.

Belongs to the universal ribosomal protein uL2 family. As to quaternary structure, component of the large ribosomal subunit.

The protein resides in the cytoplasm. In terms of biological role, component of the large ribosomal subunit. The ribosome is a large ribonucleoprotein complex responsible for the synthesis of proteins in the cell. The chain is Large ribosomal subunit protein uL2 (rpl8) from Xenopus laevis (African clawed frog).